We begin with the raw amino-acid sequence, 488 residues long: 2,3-bisphosphoglycerate-independent phosphoglycerate mutase (488 aa).

The Phosphoserine intermediate role is filled by S10. S10 contacts Mn(2+). Residues H69, 99-100 (RD), R135, R142, 215-218 (RADR), and K290 contribute to the substrate site. Residues D359, H363, D400, H401, and H430 each coordinate Mn(2+).

This sequence belongs to the BPG-independent phosphoglycerate mutase family. Monomer. Mn(2+) is required as a cofactor.

The protein resides in the cytoplasm. It carries out the reaction (2R)-2-phosphoglycerate = (2R)-3-phosphoglycerate. Its pathway is carbohydrate degradation; glycolysis; pyruvate from D-glyceraldehyde 3-phosphate: step 3/5. Its function is as follows. Catalyzes the interconversion of 2-phosphoglycerate and 3-phosphoglycerate. This Prunus dulcis (Almond) protein is 2,3-bisphosphoglycerate-independent phosphoglycerate mutase.